A 764-amino-acid chain; its full sequence is Cyclin-F (764 aa).

A Nuclear localization signal 1 motif is present at residues arginine 19–serine 27. The F-box domain occupies alanine 28–valine 75. Positions threonine 307 to isoleucine 404 constitute a Cyclin N-terminal domain. The short motif at arginine 309–leucine 312 is the D box 1 element. Residues serine 570–arginine 575 carry the Nuclear localization signal 2 motif. The segment at arginine 583–lysine 738 is PEST. The tract at residues cysteine 662–aspartate 754 is disordered. The segment covering serine 682–serine 692 has biased composition (low complexity). The segment covering serine 702–proline 722 has biased composition (polar residues). Residues arginine 732 to threonine 742 show a composition bias toward basic residues.

This sequence belongs to the cyclin family. Cyclin AB subfamily. Component of the SCF(CCNF) complex. Expressed in the brain.

The protein localises to the nucleus. The protein resides in the cytoplasm. It is found in the perinuclear region. Its subcellular location is the cytoskeleton. It localises to the microtubule organizing center. The protein localises to the centrosome. The protein resides in the centriole. In terms of biological role, substrate recognition component of a SCF (SKP1-CUL1-F-box protein) E3 ubiquitin-protein ligase complex which mediates the ubiquitination and subsequent proteasomal degradation of target proteins. The SCF(CCNF) E3 ubiquitin-protein ligase complex is an integral component of the ubiquitin proteasome system (UPS) and links proteasome degradation to the cell cycle. Mediates the substrate recognition and the proteasomal degradation of various target proteins during G2 phase involved in the regulation of cell cycle progression and in the maintenance of genome stability. May play a role in motor neuron development and axonal outgrowth. This Danio rerio (Zebrafish) protein is Cyclin-F (ccnf).